The sequence spans 213 residues: Protein SRN2 (213 aa).

Residues 128 to 213 (SKYVASWQDY…TWDKQGNLKY (86 aa)) enclose the VPS37 C-terminal domain.

This sequence belongs to the VPS37 family. Component of the ESCRT-I complex (endosomal sorting complex required for transport I) which consists of STP22, VPS28, SRN2 and MVB12 in a 1:1:1:1 stoichiometry. Interacts with STP22 and MVB12.

It is found in the cytoplasm. Its subcellular location is the endosome. The protein resides in the late endosome membrane. Functionally, component of the ESCRT-I complex, a regulator of vesicular trafficking process. Required for normal endocytic and biosynthetic traffic to the yeast vacuole. This chain is Protein SRN2 (SRN2), found in Saccharomyces cerevisiae (strain ATCC 204508 / S288c) (Baker's yeast).